A 396-amino-acid polypeptide reads, in one-letter code: Protein nipi-4 (396 aa).

At 1–20 (MELDHTPPPSVLNDNCSASY) the chain is on the extracellular side. N-linked (GlcNAc...) asparagine glycosylation is present at Asn-15. The helical transmembrane segment at 21–41 (MTPYATVIAMSGLYLLAIFYF) threads the bilayer. The Cytoplasmic segment spans residues 42-396 (CKKSKKMCQP…EHHCQSVIHY (355 aa)). The Protein kinase domain occupies 81-368 (EVDDFQIGQT…SRLSELHHIV (288 aa)). ATP-binding positions include 87–95 (IGQTADGFI) and Lys-111.

Belongs to the protein kinase superfamily. Tyr protein kinase family. Expressed in the epidermis of larvae and adults and in vulval and rectal cells.

It is found in the membrane. Its function is as follows. Pseudokinase which plays a role in resistance to fungal infection by promoting expression of antimicrobial peptides (nlp-29, nlp-31, nlp-34, cnc-1, cnc-2 and cnc-4) in the epidermis. In addition, up-regulates nlp-29 expression upon physical wounding and in response to phorbol ester PMA treatment. This is Protein nipi-4 from Caenorhabditis elegans.